Consider the following 455-residue polypeptide: GTPase Der (455 aa).

EngA-type G domains lie at 4–169 (PVVA…PPKS) and 178–353 (IQLA…EQHR). GTP is bound by residues 10–17 (GRPNVGKS), 57–61 (DTGGL), 120–123 (NKCE), 184–191 (GRPNVGKS), 231–235 (DTAGI), and 296–299 (NKWD). The region spanning 354-439 (RRVSTSVVNE…PLKLFWRGKQ (86 aa)) is the KH-like domain.

The protein belongs to the TRAFAC class TrmE-Era-EngA-EngB-Septin-like GTPase superfamily. EngA (Der) GTPase family. As to quaternary structure, associates with the 50S ribosomal subunit.

Its function is as follows. GTPase that plays an essential role in the late steps of ribosome biogenesis. In Synechococcus sp. (strain WH7803), this protein is GTPase Der.